The sequence spans 246 residues: 1-(5-phosphoribosyl)-5-[(5-phosphoribosylamino)methylideneamino] imidazole-4-carboxamide isomerase (246 aa).

Residue Asp7 is the Proton acceptor of the active site. Asp129 serves as the catalytic Proton donor.

It belongs to the HisA/HisF family.

Its subcellular location is the cytoplasm. It catalyses the reaction 1-(5-phospho-beta-D-ribosyl)-5-[(5-phospho-beta-D-ribosylamino)methylideneamino]imidazole-4-carboxamide = 5-[(5-phospho-1-deoxy-D-ribulos-1-ylimino)methylamino]-1-(5-phospho-beta-D-ribosyl)imidazole-4-carboxamide. It participates in amino-acid biosynthesis; L-histidine biosynthesis; L-histidine from 5-phospho-alpha-D-ribose 1-diphosphate: step 4/9. This Shewanella sediminis (strain HAW-EB3) protein is 1-(5-phosphoribosyl)-5-[(5-phosphoribosylamino)methylideneamino] imidazole-4-carboxamide isomerase.